A 311-amino-acid chain; its full sequence is tRNA dimethylallyltransferase (311 aa).

10 to 17 (GPTASGKT) provides a ligand contact to ATP. 12–17 (TASGKT) is a binding site for substrate. Interaction with substrate tRNA regions lie at residues 35-38 (DSAL), 159-163 (QRINR), and 240-245 (RCVGYR).

This sequence belongs to the IPP transferase family. Monomer. The cofactor is Mg(2+).

It catalyses the reaction adenosine(37) in tRNA + dimethylallyl diphosphate = N(6)-dimethylallyladenosine(37) in tRNA + diphosphate. Its function is as follows. Catalyzes the transfer of a dimethylallyl group onto the adenine at position 37 in tRNAs that read codons beginning with uridine, leading to the formation of N6-(dimethylallyl)adenosine (i(6)A). The sequence is that of tRNA dimethylallyltransferase from Haemophilus influenzae (strain 86-028NP).